The following is a 63-amino-acid chain: Hyphancin-3G (63 aa).

Residues 1-22 (MNFSRILFFMFACFVALASVSA) form the signal peptide. The propeptide at 23–26 (VPEP) is removed by a dipeptidylpeptidase. Residue L61 is modified to Leucine amide.

This sequence belongs to the cecropin family.

The protein localises to the secreted. Functionally, has antibacterial activity. This Hyphantria cunea (Fall webworm moth) protein is Hyphancin-3G.